The chain runs to 182 residues: Hexose transport activator protein (182 aa).

Residues 46 to 65 (GIWGPMEKKPGGVGKKKGSE) form a disordered region.

Multicopy expression suppresses glucose-uptake defects in various yeast mutants. This is Hexose transport activator protein (AHT1) from Saccharomyces cerevisiae (strain ATCC 204508 / S288c) (Baker's yeast).